Consider the following 302-residue polypeptide: Nucleotide-binding protein BceJ2315_08000 (302 aa).

Residue 8 to 15 (GISGSGKS) participates in ATP binding. 57 to 60 (DARS) serves as a coordination point for GTP.

Belongs to the RapZ-like family.

Its function is as follows. Displays ATPase and GTPase activities. This is Nucleotide-binding protein BceJ2315_08000 from Burkholderia cenocepacia (strain ATCC BAA-245 / DSM 16553 / LMG 16656 / NCTC 13227 / J2315 / CF5610) (Burkholderia cepacia (strain J2315)).